Consider the following 446-residue polypeptide: Exodeoxyribonuclease 7 large subunit (446 aa).

Belongs to the XseA family. As to quaternary structure, heterooligomer composed of large and small subunits.

The protein localises to the cytoplasm. It carries out the reaction Exonucleolytic cleavage in either 5'- to 3'- or 3'- to 5'-direction to yield nucleoside 5'-phosphates.. Bidirectionally degrades single-stranded DNA into large acid-insoluble oligonucleotides, which are then degraded further into small acid-soluble oligonucleotides. The sequence is that of Exodeoxyribonuclease 7 large subunit from Streptococcus pneumoniae (strain Hungary19A-6).